Here is a 96-residue protein sequence, read N- to C-terminus: Large ribosomal subunit protein bL28 (96 aa).

A disordered region spans residues 1-22 (MSRRCELTGKGPMTGNNVSHAN).

Belongs to the bacterial ribosomal protein bL28 family.

The polypeptide is Large ribosomal subunit protein bL28 (Ruegeria sp. (strain TM1040) (Silicibacter sp.)).